The sequence spans 158 residues: Large ribosomal subunit protein uL11 (158 aa).

This sequence belongs to the universal ribosomal protein uL11 family. As to quaternary structure, part of the ribosomal stalk of the 50S ribosomal subunit. Interacts with L10 and the large rRNA to form the base of the stalk. L10 forms an elongated spine to which L12 dimers bind in a sequential fashion forming a multimeric L10(L12)X complex.

In terms of biological role, forms part of the ribosomal stalk which helps the ribosome interact with GTP-bound translation factors. The chain is Large ribosomal subunit protein uL11 from Methanoregula boonei (strain DSM 21154 / JCM 14090 / 6A8).